Consider the following 309-residue polypeptide: UDP-N-acetylenolpyruvoylglucosamine reductase (309 aa).

The region spanning 34 to 198 (RVGGPAEVMF…VRARLHARPG (165 aa)) is the FAD-binding PCMH-type domain. Residue arginine 178 is part of the active site. Serine 227 (proton donor) is an active-site residue. Residue glutamate 297 is part of the active site.

This sequence belongs to the MurB family. The cofactor is FAD.

Its subcellular location is the cytoplasm. It carries out the reaction UDP-N-acetyl-alpha-D-muramate + NADP(+) = UDP-N-acetyl-3-O-(1-carboxyvinyl)-alpha-D-glucosamine + NADPH + H(+). The protein operates within cell wall biogenesis; peptidoglycan biosynthesis. In terms of biological role, cell wall formation. This is UDP-N-acetylenolpyruvoylglucosamine reductase from Acidiphilium cryptum (strain JF-5).